The chain runs to 459 residues: Zinc finger transcription factor lin-29 (459 aa).

Over residues Met-1–Val-14 the composition is skewed to polar residues. The interval Met-1 to His-73 is disordered. Residues Ser-16 to Gly-56 are compositionally biased toward low complexity. Residues Ala-57–His-73 show a composition bias toward polar residues. 5 consecutive C2H2-type zinc fingers follow at residues Tyr-151–His-173, Gly-180–His-202, Tyr-208–His-232, Phe-238–His-260, and His-269–His-291. An interacts with mab-10 region spans residues Pro-390 to Gly-406. Low complexity predominate over residues Val-423–Val-444. Residues Val-423–Tyr-459 form a disordered region. Polar residues predominate over residues Asn-446–Tyr-459.

In terms of assembly, interacts (via C-terminus) with transcription cofactor mab-10. Expressed in lateral hypodermal seam cells (at protein level).

It localises to the nucleus. Transcription factor which regulates the expression of various genes, including those involved in cuticle synthesis and maintenance, such as collagens, and in lipid metabolism. Binds to promoter regions of genes, at 5'-[(T/G)TTTTTT(A/T/C/G)]-3' consensus sequences. Heterochronic protein which controls the choice of stage specific cell fates, including at the juvenile to adult transition. Promotes differentiation, together with transcriptional cofactor mab-10, perhaps as part of a transcriptional complex. Required for vulval morphogenesis and egg laying; perhaps by acting in a subset of the lateral seam cells. Involved in the exit of seam cells from the cell cycle. Required for specification of uterine pi-cell fate, acting upstream of lin-12 Notch signaling, perhaps via maintenance of lag-2 expression in the anchor cell (AC). Involved in morphogenesis of the specialized male tail used in mating. Acts cell non-autonomously from the hypodermis to regulate expression of genes in the intestine, including genes involved in lipid metabolism. May regulate vitellogenesis via the mTORC2 signaling mediated pathway, independently of daf-16. May promote nuclear accumulation of mab-10 in seam cells post-transcriptionally. Dispensable for seam cell fusion. In terms of biological role, required for seam cell fusion. This is Zinc finger transcription factor lin-29 from Caenorhabditis elegans.